The chain runs to 211 residues: Synaptosomal-associated protein 23 (211 aa).

Methionine 1 is subject to N-acetylmethionine. A phosphoserine mark is found at serine 5, serine 6, serine 20, serine 23, and serine 34. In terms of domain architecture, t-SNARE coiled-coil homology 1 spans 14 to 76 (HQITDESLES…RETEKTLTEL (63 aa)). Residues 23 to 76 (STRRILGLAIESQDAGIKTITMLDEQKEQLNRIEEGLDQINKDMRETEKTLTEL) are a coiled coil. Residues cysteine 79, cysteine 80, cysteine 83, cysteine 85, and cysteine 87 are each lipidated (S-palmitoyl cysteine). Position 110 is a phosphoserine (serine 110). Cysteine 112 carries S-palmitoyl cysteine lipidation. Residues 146–208 (DAREDEMEEN…DIANARAKKL (63 aa)) form the t-SNARE coiled-coil homology 2 domain. Serine 161 is subject to Phosphoserine.

Belongs to the SNAP-25 family. In terms of assembly, homotetramer (via coiled-coil domain), also forms heterotetramers with STX4 and VAMP3. Found in a complex with VAMP8 and STX1A. Found in a complex with VAMP8 and STX4 in pancreas. Interacts simultaneously with SNAPIN and SYN4. Interacts with STX1A. Interacts with STX12. Interacts tightly to multiple syntaxins and synaptobrevins/VAMPs. Interacts with ZDHHC13 (via ANK repeats). Interacts with ZDHHC17 (via ANK repeats). Ubiquitous. Highest levels where found in placenta.

It localises to the cell membrane. The protein localises to the synapse. It is found in the synaptosome. Essential component of the high affinity receptor for the general membrane fusion machinery and an important regulator of transport vesicle docking and fusion. The sequence is that of Synaptosomal-associated protein 23 (SNAP23) from Homo sapiens (Human).